The chain runs to 412 residues: Serine hydroxymethyltransferase (412 aa).

(6S)-5,6,7,8-tetrahydrofolate-binding positions include Leu-117 and 121–123 (GHL). Lys-226 is subject to N6-(pyridoxal phosphate)lysine.

This sequence belongs to the SHMT family. Homodimer. Pyridoxal 5'-phosphate serves as cofactor.

The protein resides in the cytoplasm. The catalysed reaction is (6R)-5,10-methylene-5,6,7,8-tetrahydrofolate + glycine + H2O = (6S)-5,6,7,8-tetrahydrofolate + L-serine. It functions in the pathway one-carbon metabolism; tetrahydrofolate interconversion. It participates in amino-acid biosynthesis; glycine biosynthesis; glycine from L-serine: step 1/1. Its function is as follows. Catalyzes the reversible interconversion of serine and glycine with tetrahydrofolate (THF) serving as the one-carbon carrier. This reaction serves as the major source of one-carbon groups required for the biosynthesis of purines, thymidylate, methionine, and other important biomolecules. Also exhibits THF-independent aldolase activity toward beta-hydroxyamino acids, producing glycine and aldehydes, via a retro-aldol mechanism. This Symbiobacterium thermophilum (strain DSM 24528 / JCM 14929 / IAM 14863 / T) protein is Serine hydroxymethyltransferase.